Consider the following 226-residue polypeptide: MHLLIAAAGSGRRMGADRNKLLLPLAGKPVIAWTLKAALAAEHIQWIGVVGQEIDREPILDLVRDANKPVTWIQGGSTRQESVLRGLAGLPEAAEQVLIHDGARCLAEPALFDRCAMALASGQALIAATPVTDTIKRVDADGVITDTPDRSELWAAQTPQGFQVDQLRHGHAEAEANGWTVTDDASLYERLGWPVQVLDAGPSNIKVTTPFDLNVAEAVLALRQQD.

Belongs to the IspD/TarI cytidylyltransferase family. IspD subfamily.

The enzyme catalyses 2-C-methyl-D-erythritol 4-phosphate + CTP + H(+) = 4-CDP-2-C-methyl-D-erythritol + diphosphate. It functions in the pathway isoprenoid biosynthesis; isopentenyl diphosphate biosynthesis via DXP pathway; isopentenyl diphosphate from 1-deoxy-D-xylulose 5-phosphate: step 2/6. Catalyzes the formation of 4-diphosphocytidyl-2-C-methyl-D-erythritol from CTP and 2-C-methyl-D-erythritol 4-phosphate (MEP). This chain is 2-C-methyl-D-erythritol 4-phosphate cytidylyltransferase, found in Parasynechococcus marenigrum (strain WH8102).